Consider the following 562-residue polypeptide: Tripeptidyl-peptidase 1 (562 aa).

Residues 1 to 19 (MGLQARLLGLLALVIAGKC) form the signal peptide. The propeptide at 20–194 (TYNPEPDQRW…PEPQQVGTVS (175 aa)) is removed in mature form. A disulfide bridge links Cys-111 with Cys-122. Residues 198-562 (GVTPSVLRQR…PALLKTLLNP (365 aa)) enclose the Peptidase S53 domain. Asn-209 is a glycosylation site (N-linked (GlcNAc...) asparagine). Residue Asn-221 is glycosylated (N-linked (GlcNAc...) (high mannose) asparagine). Catalysis depends on charge relay system residues Glu-271 and Asp-275. Asn-285, Asn-312, and Asn-442 each carry an N-linked (GlcNAc...) asparagine glycan. 2 disulfide bridges follow: Cys-364–Cys-525 and Cys-521–Cys-536. Catalysis depends on Ser-474, which acts as the Charge relay system. Residues Asp-516 and Val-517 each coordinate Ca(2+). Ca(2+) is bound by residues Gly-538, Gly-540, and Asp-542.

Monomer. Interacts with CLN5. Interacts with CLN3. Requires Ca(2+) as cofactor. In terms of processing, activated by autocatalytic proteolytical processing upon acidification. N-glycosylation is required for processing and activity.

The protein resides in the lysosome. It localises to the melanosome. The catalysed reaction is Release of an N-terminal tripeptide from a polypeptide, but also has endopeptidase activity.. In terms of biological role, lysosomal serine protease with tripeptidyl-peptidase I activity. May act as a non-specific lysosomal peptidase which generates tripeptides from the breakdown products produced by lysosomal proteinases. Requires substrates with an unsubstituted N-terminus. This is Tripeptidyl-peptidase 1 (Tpp1) from Mus musculus (Mouse).